The sequence spans 271 residues: D-methionine-binding lipoprotein MetQ (271 aa).

An N-terminal signal peptide occupies residues 1–22 (MAFKFKTFAAVGALIGSLALAG). Cysteine 23 is lipidated: N-palmitoyl cysteine. The S-diacylglycerol cysteine moiety is linked to residue cysteine 23.

Belongs to the NlpA lipoprotein family.

The protein resides in the cell membrane. Its function is as follows. This protein is a component of a D-methionine permease, a binding protein-dependent, ATP-driven transport system. The polypeptide is D-methionine-binding lipoprotein MetQ (metQ) (Salmonella typhimurium (strain LT2 / SGSC1412 / ATCC 700720)).